The primary structure comprises 317 residues: Porphobilinogen deaminase (317 aa).

At cysteine 240 the chain carries S-(dipyrrolylmethanemethyl)cysteine.

The protein belongs to the HMBS family. Monomer. Dipyrromethane serves as cofactor.

It catalyses the reaction 4 porphobilinogen + H2O = hydroxymethylbilane + 4 NH4(+). Its pathway is porphyrin-containing compound metabolism; protoporphyrin-IX biosynthesis; coproporphyrinogen-III from 5-aminolevulinate: step 2/4. In terms of biological role, tetrapolymerization of the monopyrrole PBG into the hydroxymethylbilane pre-uroporphyrinogen in several discrete steps. The protein is Porphobilinogen deaminase of Nitratidesulfovibrio vulgaris (strain DSM 19637 / Miyazaki F) (Desulfovibrio vulgaris).